We begin with the raw amino-acid sequence, 416 residues long: Histidine--tRNA ligase (416 aa).

The protein belongs to the class-II aminoacyl-tRNA synthetase family. As to quaternary structure, homodimer.

Its subcellular location is the cytoplasm. It carries out the reaction tRNA(His) + L-histidine + ATP = L-histidyl-tRNA(His) + AMP + diphosphate + H(+). The protein is Histidine--tRNA ligase of Clostridium novyi (strain NT).